The sequence spans 162 residues: Precorrin-2 dehydrogenase (162 aa).

NAD(+) contacts are provided by residues serine 20 to isoleucine 21 and proline 41 to aspartate 42.

Belongs to the precorrin-2 dehydrogenase / sirohydrochlorin ferrochelatase family.

The enzyme catalyses precorrin-2 + NAD(+) = sirohydrochlorin + NADH + 2 H(+). It functions in the pathway cofactor biosynthesis; adenosylcobalamin biosynthesis; sirohydrochlorin from precorrin-2: step 1/1. It participates in porphyrin-containing compound metabolism; siroheme biosynthesis; sirohydrochlorin from precorrin-2: step 1/1. Its function is as follows. Catalyzes the dehydrogenation of precorrin-2 to form sirohydrochlorin which is used as a precursor in both siroheme biosynthesis and in the anaerobic branch of adenosylcobalamin biosynthesis. The sequence is that of Precorrin-2 dehydrogenase (sirC) from Bacillus subtilis (strain 168).